We begin with the raw amino-acid sequence, 146 residues long: Single-stranded DNA-binding protein, mitochondrial (146 aa).

The transit peptide at 1–16 directs the protein to the mitochondrion; that stretch reads MLRNASAQILKQFVRH. The SSB domain maps to 29 to 140; the sequence is INKVQILGRV…IIADNIVFLS (112 aa).

The protein resides in the mitochondrion. Its subcellular location is the mitochondrion matrix. It localises to the mitochondrion nucleoid. Functionally, binds preferentially and cooperatively to pyrimidine rich single-stranded DNA (ss-DNA). May be required to maintain the copy number of mitochondrial DNA (mtDNA) and play a crucial role during mtDNA replication. Required for retinal ganglion cell differentiation and retinal integrity. This chain is Single-stranded DNA-binding protein, mitochondrial, found in Danio rerio (Zebrafish).